The following is a 355-amino-acid chain: Sulfate/thiosulfate import ATP-binding protein CysA (355 aa).

Residues 3–233 (IIINNVSKQF…PASPFVMGFI (231 aa)) form the ABC transporter domain. ATP is bound at residue 35-42 (GPSGSGKS).

The protein belongs to the ABC transporter superfamily. Sulfate/tungstate importer (TC 3.A.1.6) family. As to quaternary structure, the complex is composed of two ATP-binding proteins (CysA), two transmembrane proteins (CysT and CysW) and a solute-binding protein (CysP).

It is found in the cell inner membrane. It catalyses the reaction sulfate(out) + ATP + H2O = sulfate(in) + ADP + phosphate + H(+). The enzyme catalyses thiosulfate(out) + ATP + H2O = thiosulfate(in) + ADP + phosphate + H(+). Its function is as follows. Part of the ABC transporter complex CysAWTP involved in sulfate/thiosulfate import. Responsible for energy coupling to the transport system. The chain is Sulfate/thiosulfate import ATP-binding protein CysA from Synechocystis sp. (strain ATCC 27184 / PCC 6803 / Kazusa).